The sequence spans 300 residues: SNAP25 homologous protein SNAP33 (300 aa).

2 disordered regions span residues M1 to F76 and W176 to A228. S29 carries the post-translational modification Phosphoserine. The span at T38–P49 shows a compositional bias: polar residues. Residues T190 to L208 show a composition bias toward basic and acidic residues. In terms of domain architecture, t-SNARE coiled-coil homology spans E235 to L297.

Belongs to the SNAP-25 family. Interacts with the cytokinesis-specific syntaxin KNOLLE and with SYP121. Binds to EXO70B2. As to expression, ubiquitous, with a strong expression in root tips, ovules, very young leaves, vascular tissue, hydathodes, stipules and the abscission and dehiscence zones of the siliques.

It localises to the membrane. Its function is as follows. t-SNARE involved in diverse vesicle trafficking and membrane fusion processes, including cell plate formation. May function in the secretory pathway. The sequence is that of SNAP25 homologous protein SNAP33 from Arabidopsis thaliana (Mouse-ear cress).